A 388-amino-acid chain; its full sequence is Homoserine O-acetyltransferase (388 aa).

One can recognise an AB hydrolase-1 domain in the interval 55–354; it reads PIVLIEHALT…PTGHDGFLIE (300 aa). Catalysis depends on serine 150, which acts as the Nucleophile. A substrate-binding site is contributed by arginine 220. Active-site residues include aspartate 318 and histidine 348. Substrate is bound at residue aspartate 349.

It belongs to the AB hydrolase superfamily. MetX family. In terms of assembly, homodimer.

The protein resides in the cytoplasm. The catalysed reaction is L-homoserine + acetyl-CoA = O-acetyl-L-homoserine + CoA. The protein operates within amino-acid biosynthesis; L-methionine biosynthesis via de novo pathway; O-acetyl-L-homoserine from L-homoserine: step 1/1. In terms of biological role, transfers an acetyl group from acetyl-CoA to L-homoserine, forming acetyl-L-homoserine. This is Homoserine O-acetyltransferase from Corynebacterium urealyticum (strain ATCC 43042 / DSM 7109).